An 828-amino-acid chain; its full sequence is Periplasmic nitrate reductase (828 aa).

Positions 1–31 (MKLSRRSFMKANAVAAAAAAAGLSVPGVARA) form a signal peptide, tat-type signal. Residues 39–95 (IKWDKAPCRFCGTGCGVLVGTQQGRVVACQGDPDAPVNRGLNCIKGYFLPKIMYGKD) form the 4Fe-4S Mo/W bis-MGD-type domain. [4Fe-4S] cluster-binding residues include cysteine 46, cysteine 49, cysteine 53, and cysteine 81. Residues lysine 83, glutamine 150, asparagine 175, cysteine 179, 212–219 (WGANMAEM), 243–247 (STYQH), 262–264 (QSD), methionine 372, glutamine 376, asparagine 482, 508–509 (SD), lysine 531, aspartate 558, and 718–727 (TGRVLEHWHT) contribute to the Mo-bis(molybdopterin guanine dinucleotide) site. Substrate is bound at residue phenylalanine 794. Asparagine 802 and lysine 819 together coordinate Mo-bis(molybdopterin guanine dinucleotide).

Belongs to the prokaryotic molybdopterin-containing oxidoreductase family. NasA/NapA/NarB subfamily. Component of the periplasmic nitrate reductase NapAB complex composed of NapA and NapB. [4Fe-4S] cluster serves as cofactor. The cofactor is Mo-bis(molybdopterin guanine dinucleotide). Post-translationally, predicted to be exported by the Tat system. The position of the signal peptide cleavage has not been experimentally proven.

The protein resides in the periplasm. The catalysed reaction is 2 Fe(II)-[cytochrome] + nitrate + 2 H(+) = 2 Fe(III)-[cytochrome] + nitrite + H2O. Functionally, catalytic subunit of the periplasmic nitrate reductase complex NapAB. Receives electrons from NapB and catalyzes the reduction of nitrate to nitrite. This Escherichia coli O6:K15:H31 (strain 536 / UPEC) protein is Periplasmic nitrate reductase.